The sequence spans 425 residues: Septin-7 (425 aa).

One can recognise a Septin-type G domain in the interval 28–297; that stretch reads RGFEFTLMVV…ENYRSRKLAA (270 aa). The G1 motif stretch occupies residues 38 to 45; sequence GESGLGKS. GTP is bound by residues 38-45, Thr71, Gly97, 176-184, Gly231, and Arg246; these read GESGLGKS and KADTLTPEE. The interval 94–97 is G3 motif; it reads DTPG. Residues 175-178 form a G4 motif region; sequence AKAD. Residues 324 to 421 adopt a coiled-coil conformation; the sequence is LAQMEEERRE…SRTLEKNKKK (98 aa).

It belongs to the TRAFAC class TrmE-Era-EngA-EngB-Septin-like GTPase superfamily. Septin GTPase family. Monomer, and homodimer. Nucleotide binding promotes oligomerization. Can form heterooligomers with other family members and form filaments.

It localises to the cytoplasm. The protein resides in the chromosome. It is found in the centromere. The protein localises to the kinetochore. Its subcellular location is the cytoskeleton. It localises to the spindle. The protein resides in the cleavage furrow. It is found in the midbody. The protein localises to the cilium axoneme. Filament-forming cytoskeletal GTPase. Required for normal organization of the actin cytoskeleton. Required for normal progress through mitosis. Involved in cytokinesis. Plays a role in ciliogenesis and collective cell movements including convergent extension during gastrulation. Controls cell elongation but not polarization during convergent extension. In Xenopus laevis (African clawed frog), this protein is Septin-7.